A 301-amino-acid chain; its full sequence is Ethylmalonyl-CoA decarboxylase (301 aa).

K211 is modified (N6-acetyllysine; alternate). K211 is modified (N6-succinyllysine; alternate). K295 carries the N6-succinyllysine modification.

The protein belongs to the enoyl-CoA hydratase/isomerase family.

It localises to the cytoplasm. The protein localises to the cytosol. The catalysed reaction is (2S)-ethylmalonyl-CoA + H(+) = butanoyl-CoA + CO2. It carries out the reaction (S)-methylmalonyl-CoA + H(+) = propanoyl-CoA + CO2. It catalyses the reaction (2R)-ethylmalonyl-CoA + H(+) = butanoyl-CoA + CO2. Its function is as follows. Decarboxylates ethylmalonyl-CoA, a potentially toxic metabolite, to form butyryl-CoA, suggesting it might be involved in metabolite proofreading. Acts preferentially on (S)-ethylmalonyl-CoA but also has some activity on the (R)-isomer. Also has methylmalonyl-CoA decarboxylase activity at lower level. The polypeptide is Ethylmalonyl-CoA decarboxylase (ECHDC1) (Pongo abelii (Sumatran orangutan)).